The following is a 554-amino-acid chain: Glutamine--tRNA ligase (554 aa).

The short motif at Pro-34–His-44 is the 'HIGH' region element. ATP-binding positions include Glu-35–Asn-37 and His-41–Ser-47. Asp-67 and Tyr-212 together coordinate L-glutamine. ATP contacts are provided by residues Thr-231, Arg-261–Leu-262, and Met-269–Lys-271. The 'KMSKS' region signature appears at Ile-268–Arg-272.

Belongs to the class-I aminoacyl-tRNA synthetase family. As to quaternary structure, monomer.

It is found in the cytoplasm. The enzyme catalyses tRNA(Gln) + L-glutamine + ATP = L-glutaminyl-tRNA(Gln) + AMP + diphosphate. This Serratia proteamaculans (strain 568) protein is Glutamine--tRNA ligase.